A 382-amino-acid polypeptide reads, in one-letter code: MSDPIIIIGSGFAAYQLVKSVRRLDAHIPIQIFTADDGAEYNKPDLSHVFSKRQTAADLVVKSGEAFATEHNVQLHAHTQVERVLTQQQQVVANGRCYPYSKLVFATGAQAFVPPMRGDGLAKVMTLNSLQEYQAAEQPLSRAQHVLVIGGGLIGVEIALDLATSGKQVTVVEPNARLLANLLPEFIALPLEQQLMKHGIQLALNSRVESVTVQGQTLAIALHDGREFAVDAVLCAAGLKANTAVAREAGLSVERGICVDLQLNTSDPHIYALGDCAQIEGRMLPYLQPIVLSANVLAKQLVGQEARLTLPPMMVKVKTPSYPIQLAGDFSPESHWQVQLSPEGIVAKAQSSLGDFTGFVVTGEYVTQAFPLLRELSQRANG.

This sequence belongs to the FAD-dependent oxidoreductase family. The cofactor is FAD.

It localises to the cytoplasm. It catalyses the reaction 2 reduced [nitric oxide reductase rubredoxin domain] + NAD(+) + H(+) = 2 oxidized [nitric oxide reductase rubredoxin domain] + NADH. It participates in nitrogen metabolism; nitric oxide reduction. Its function is as follows. One of at least two accessory proteins for anaerobic nitric oxide (NO) reductase. Reduces the rubredoxin moiety of NO reductase. The chain is Nitric oxide reductase FlRd-NAD(+) reductase from Vibrio vulnificus (strain YJ016).